We begin with the raw amino-acid sequence, 725 residues long: N-alpha-acetyltransferase 35, NatC auxiliary subunit (725 aa).

Phosphoserine is present on serine 187. The tract at residues 548 to 573 (ERIMEEQQKGRSSKKTKKKKKVRPLS) is disordered. Residues 558–571 (RSSKKTKKKKKVRP) show a composition bias toward basic residues.

The protein belongs to the MAK10 family. In terms of assembly, component of the N-terminal acetyltransferase C (NatC) complex, which is composed of NAA35, NAA38 and NAA30.

Its subcellular location is the cytoplasm. Functionally, auxillary component of the N-terminal acetyltransferase C (NatC) complex which catalyzes acetylation of N-terminal methionine residues. N-terminal acetylation protects proteins from ubiquitination and degradation by the N-end rule pathway. Involved in regulation of apoptosis and proliferation of smooth muscle cells. The chain is N-alpha-acetyltransferase 35, NatC auxiliary subunit (NAA35) from Homo sapiens (Human).